A 319-amino-acid polypeptide reads, in one-letter code: Fructokinase (319 aa).

Belongs to the carbohydrate kinase PfkB family. As to expression, expressed in swelling stolons and, at higher levels, in developing tubers. Low levels found in leaves and stems from tuberizing plants.

The catalysed reaction is D-fructose + ATP = D-fructose 6-phosphate + ADP + H(+). It participates in glycan biosynthesis; starch biosynthesis. In terms of biological role, may play an important role in maintaining the flux of carbon towards starch formation. The polypeptide is Fructokinase (Solanum tuberosum (Potato)).